The primary structure comprises 21 residues: Histone H2B 1 (21 aa).

The tract at residues methionine 1–alanine 21 is disordered. An N6-acetyllysine mark is found at lysine 6 and lysine 11. Residues alanine 8–alanine 21 are compositionally biased toward basic residues. Phosphoserine is present on serine 13. 2 positions are modified to N6-acetyllysine: lysine 14 and lysine 19. Lysine 19 participates in a covalent cross-link: Glycyl lysine isopeptide (Lys-Gly) (interchain with G-Cter in ubiquitin).

Belongs to the histone H2B family. In terms of assembly, the nucleosome is a histone octamer containing two molecules each of H2A, H2B, H3 and H4 assembled in one H3-H4 heterotetramer and two H2A-H2B heterodimers. The octamer wraps approximately 147 bp of DNA. Post-translationally, monoubiquitination at the C-terminal Lys gives a specific tag for epigenetic transcriptional activation and is also prerequisite for histone H3 'Lys-4' and 'Lys-79' methylation. Phosphorylated during apoptosis; which facilitates apoptotic chromatin condensation.

It localises to the nucleus. The protein localises to the chromosome. Core component of nucleosome. Nucleosomes wrap and compact DNA into chromatin, limiting DNA accessibility to the cellular machineries which require DNA as a template. Histones thereby play a central role in transcription regulation, DNA repair, DNA replication and chromosomal stability. DNA accessibility is regulated via a complex set of post-translational modifications of histones, also called histone code, and nucleosome remodeling. Its function is as follows. Has broad-spectrum antimicrobial and antibacterial activity. It is important in the antimicrobial defenses of fish skin and possesses strong activity against saprolegnia, the most common fungal infection in fish. It is also inhibitory to fish bacterial pathogens, such as aeromonas hydrophila, vibrio alginolyticus and E.coli D31. The polypeptide is Histone H2B 1 (Ictalurus punctatus (Channel catfish)).